A 495-amino-acid chain; its full sequence is Ankyrin repeat domain-containing protein 34A (495 aa).

4 ANK repeats span residues 4-33, 37-72, 76-106, and 110-139; these read TEGH…YVNE, QGET…DPNI, LGRT…DPSV, and AGAS…AKGT. The residue at position 15 (glutamine 15) is an N5-methylglutamine. Polar residues-rich tracts occupy residues 147-162 and 180-191; these read DTSP…YLNS and VCTSPSEVQLQT. A disordered region spans residues 147–495; the sequence is DTSPSGTKKT…SLGGPGEPGR (349 aa). Basic and acidic residues predominate over residues 203 to 213; it reads AQEEEEKRDVF. Positions 223–232 are enriched in pro residues; sequence DPSPSEPLPK. The span at 233 to 242 shows a compositional bias: basic residues; it reads PPRHPPKPLK. Threonine 315 bears the Phosphothreonine mark. Residues 375–385 show a composition bias toward polar residues; it reads SVSSPRQSQES. The span at 462 to 472 shows a compositional bias: basic residues; that stretch reads RTKRKLVRRHS. Residues 485-495 are compositionally biased toward gly residues; the sequence is QSLGGPGEPGR.

The protein belongs to the ANKRD34 family. Post-translationally, methylated at Gln-15 by N6AMT1.

This Rattus norvegicus (Rat) protein is Ankyrin repeat domain-containing protein 34A (Ankrd34a).